Consider the following 250-residue polypeptide: MRLVFTGNCVFKRLLHTEIGGKYAKQQPRNLKGRSKSSQEWLTRQLADPYVEKARMMNYRCRSAFKLLEIDDKYGILRPGDTVLECGAAPGSWTQVAVERTNANGKQERAPQGAVFSIDLLHFHAVPGATIFGGMDFTSSLAQKRLREALQDRKVNCVLSDMAPNATGVRMLDQESITNLCYEVLRFALAMSAPQAHLVVKVWDNGDVPKLERDMLRFYEKVKRVKPRASRGDSAEHFLVARNFKGATDS.

Residues 1–35 (MRLVFTGNCVFKRLLHTEIGGKYAKQQPRNLKGRS) constitute a mitochondrion transit peptide. S-adenosyl-L-methionine contacts are provided by residues 90 to 93 (PGSW), D119, 136 to 137 (DF), and D161. Catalysis depends on K201, which acts as the Proton acceptor.

The protein belongs to the class I-like SAM-binding methyltransferase superfamily. RNA methyltransferase RlmE family.

It is found in the mitochondrion. The catalysed reaction is a uridine in rRNA + S-adenosyl-L-methionine = a 2'-O-methyluridine in rRNA + S-adenosyl-L-homocysteine + H(+). S-adenosyl-L-methionine-dependent 2'-O-ribose methyltransferase that catalyzes the formation of 2'-O-methyluridine at position 1579 (Um1579) in the mitochondrial large subunit ribosomal RNA (mtLSU rRNA), a universally conserved modification in the peptidyl transferase domain of the mtLSU rRNA. This activity may require prior 2'-O-methylguanosine modification at position 1580 (Gm1580) by MRM3. Essential for late-stage assembly of mtLSU required for efficient translation of mitochondrial DNA encoded proteins; methyltransferase activity is not required for this function. Essential for mitochondrial respiratory function. The chain is rRNA methyltransferase 2, mitochondrial from Drosophila melanogaster (Fruit fly).